Here is a 344-residue protein sequence, read N- to C-terminus: Dihydroorotase (344 aa).

Zn(2+) is bound by residues H13 and H15. Substrate-binding positions include 15–17 and N41; that span reads HLR. Zn(2+) is bound by residues K98, H135, and H173. K98 is modified (N6-carboxylysine). H135 contacts substrate. L218 lines the substrate pocket. Zn(2+) is bound at residue D247. The active site involves D247. Residues H251 and A263 each coordinate substrate.

This sequence belongs to the metallo-dependent hydrolases superfamily. DHOase family. Class II DHOase subfamily. As to quaternary structure, homodimer. The cofactor is Zn(2+).

The enzyme catalyses (S)-dihydroorotate + H2O = N-carbamoyl-L-aspartate + H(+). Its pathway is pyrimidine metabolism; UMP biosynthesis via de novo pathway; (S)-dihydroorotate from bicarbonate: step 3/3. Functionally, catalyzes the reversible cyclization of carbamoyl aspartate to dihydroorotate. The chain is Dihydroorotase from Neisseria meningitidis serogroup B (strain ATCC BAA-335 / MC58).